A 393-amino-acid chain; its full sequence is Major outer membrane porin, serovar L1 (393 aa).

The first 22 residues, 1–22, serve as a signal peptide directing secretion; sequence MKKLLKSVLVFAALSSASSLQA.

This sequence belongs to the chlamydial porin (CP) (TC 1.B.2) family. As to quaternary structure, part of a disulfide cross-linked outer membrane complex (COMC) composed of the major outer membrane porin (MOMP), the small cysteine-rich protein (OmcA) and the large cysteine-rich periplasmic protein (OmcB).

It localises to the cell outer membrane. Functionally, in elementary bodies (EBs, the infectious stage, which is able to survive outside the host cell) provides the structural integrity of the outer envelope through disulfide cross-links with the small cysteine-rich protein and the large cysteine-rich periplasmic protein. It has been described in publications as the Sarkosyl-insoluble COMC (Chlamydia outer membrane complex), and serves as the functional equivalent of peptidoglycan. Permits diffusion of specific solutes through the outer membrane. This chain is Major outer membrane porin, serovar L1 (ompA), found in Chlamydia trachomatis.